The sequence spans 167 residues: Small ribosomal subunit protein uS5 (167 aa).

Positions 12-75 constitute an S5 DRBM domain; that stretch reads LQEKLVAVNR…EKARRNIVSV (64 aa).

It belongs to the universal ribosomal protein uS5 family. Part of the 30S ribosomal subunit. Contacts proteins S4 and S8.

Its function is as follows. With S4 and S12 plays an important role in translational accuracy. Located at the back of the 30S subunit body where it stabilizes the conformation of the head with respect to the body. The sequence is that of Small ribosomal subunit protein uS5 from Shewanella loihica (strain ATCC BAA-1088 / PV-4).